The primary structure comprises 122 residues: uncharacterized protein (122 aa).

Helical transmembrane passes span 36 to 56 and 72 to 92; these read SVRS…YSQF and AVFL…FSTD.

It is found in the membrane. This is an uncharacterized protein from Saccharomyces cerevisiae (strain ATCC 204508 / S288c) (Baker's yeast).